A 1015-amino-acid polypeptide reads, in one-letter code: MTIRLNKVTRDLNVGIATVVEFLQKKGYTVEANPNTKITEEQYAMLVKEFSTDKNLRLESERFIQERQNKDRNKASVSIDGYDKKEPEKTVADDVIKTVIPEDVRPKFKPVGKIDLDKLNRKVEKEPVKEEPKPQPVAAEEKKVAEEVKPVVNEVKKEEVTVTPATSEPKPVKEEPKPVVVEKPVETEKKVVEEVKKEEPKVVVSPEKTEKKEEKPVAEAPVTPVEKEEEGVFKIRPTEFVSKINVIGQIDLAALNQSTRPKKKSKEEKRKEREEKEKLRQDQKKQMKEAIIKEIRKEDSKQAKVVGKENLDPNGKKKRNRINNNKEKVDVNNVASNFAHPTPNSERTNNNRGGNQQGGGGQNRNRNNNNKDRFKKPVVKQEVSEEDVAKQVKETLARLTSKGKNKGAKYRKEKRDMASNRMQELEDQEMAESKVLKLTEFVTANELASMMNVSVNQVIGTCMSIGMMVSINQRLDAETINLVAEEFGFKTEYVSAEVAQAIVEEEDAPEDLEHRAPIVTVMGHVDHGKTSLLDYIRKANVIAGEAGGITQHIGAYHVTLEDGRKITFLDTPGHEAFTAMRARGAKVTDIAIIIVAADDDVMPQTKEAINHAAAAGVPIVFAINKIDKPHANPEKIKETLAQMNYLVEEWGGKYQSQDISAKKGLGVPELMEKVLLEAEMLDLKANPNRNATGSIIESTLDKGRGYVATVLVSNGTLKVGDIVLAGTSYGRVKAMFNERNQRVAQAGPSEPVLILGLNGAPAAGDTFHVIETDQEAREIANKREQLQREQGLRTQKLLTLDEVGRRIALGNFQELNVIVKGDVDGSIEALSDSLIKLSTEQIQVNVIHKAVGQISESDVTLAAASDAIIIGFQVRPSASARKFAEQEGVDIRLYSVIYAAIEEVKAAMEGMLAPEVKEVVTATIEVREVFHITKVGTVAGAVVKEGKVKRSDKARLIRDGIVIFSGSINALKRFKDDVKEVGTNFECGISLVNYNDLKVGDMIETYEEVEVKQTL.

Disordered stretches follow at residues 124-144, 159-179, 196-230, and 250-386; these read EKEP…EKKV, EVTV…PKPV, KKEE…KEEE, and IDLA…VSEE. 2 stretches are compositionally biased toward basic and acidic residues: residues 196 to 217 and 265 to 315; these read KKEE…EKPV and SKEE…DPNG. Residues 514-684 form the tr-type G domain; that stretch reads HRAPIVTVMG…LLEAEMLDLK (171 aa). Residues 523–530 are G1; that stretch reads GHVDHGKT. 523–530 contributes to the GTP binding site; sequence GHVDHGKT. The interval 548–552 is G2; sequence GITQH. The G3 stretch occupies residues 570–573; that stretch reads DTPG. Residues 570-574 and 624-627 each bind GTP; these read DTPGH and NKID. Positions 624–627 are G4; sequence NKID. Positions 660-662 are G5; that stretch reads SAK.

Belongs to the TRAFAC class translation factor GTPase superfamily. Classic translation factor GTPase family. IF-2 subfamily.

The protein localises to the cytoplasm. One of the essential components for the initiation of protein synthesis. Protects formylmethionyl-tRNA from spontaneous hydrolysis and promotes its binding to the 30S ribosomal subunits. Also involved in the hydrolysis of GTP during the formation of the 70S ribosomal complex. This chain is Translation initiation factor IF-2, found in Bacteroides fragilis (strain ATCC 25285 / DSM 2151 / CCUG 4856 / JCM 11019 / LMG 10263 / NCTC 9343 / Onslow / VPI 2553 / EN-2).